The sequence spans 492 residues: MDPSKYRPSSAYDTPFLTTNAGGPVYNNVSSLTVGPRGPVLLEDYYLIEKLATFDREKIPERVVHARGASAKGFFEVTHDISHLTCADFLRAPGAQTPVICRFSTVVHERGSPESIRDIRGFAVKFYTREGNFDLVGNNVPVFFNRDAKSFPDTIRALKPNPKSHIQENWRILDFFSFLPESLHTFAFFYDDVCLPTDYRHMEGFGVHAYQLINKEGKAHYVKFHWKPTCGVKSMSEEEAIRVGGTNHSHATKDLYDSIAAGNYPEWKLFIQTMDPEDVDKFDFDPLDVTKTWPEDLLPLIPVGRLVLNRNIDNFFAENEQLAFNPGHIVPGIYYSEDKLLQTRIFAYADTQRHRIGPNYMQLPVNAPKCGHHNNHRDGAMNMTHRDEEVDYLPSRFDPCRPAEQYPIPACVLNGRRTNCVIPKENNFKQAGERYRSWESDRQDRYITKWVESLSDPRVTHEIRSIWISYLSQADKSCGQKVASRLTVKPTM.

Active-site residues include His65 and Asn138. Tyr348 serves as a coordination point for heme.

It belongs to the catalase family. Homotetramer. The cofactor is heme.

It localises to the peroxisome. It is found in the glyoxysome. The enzyme catalyses 2 H2O2 = O2 + 2 H2O. In terms of biological role, occurs in almost all aerobically respiring organisms and serves to protect cells from the toxic effects of hydrogen peroxide. This Solanum tuberosum (Potato) protein is Catalase isozyme 2 (CAT2).